We begin with the raw amino-acid sequence, 286 residues long: Phycobilisome 32.1 kDa linker polypeptide, phycocyanin-associated, rod (286 aa).

Positions 2 to 180 (AITTAASRLG…LYRGYANSDR (179 aa)) constitute a PBS-linker domain. Residues 234 to 286 (DRVYRLEVTGIRSPGYPSVRRSSTVFIVPYERLSDKIQQVHKQGGKIVSVTSA) enclose the CpcD-like domain.

This sequence belongs to the phycobilisome linker protein family. Associated with the phycobilisome, a hemidiscoidal structure that is composed of two distinct substructures: a core complex and a number of rods radiating from the core.

Its subcellular location is the cellular thylakoid membrane. Functionally, rod linker protein, associated with phycocyanin. Linker polypeptides determine the state of aggregation and the location of the disk-shaped phycobiliprotein units within the phycobilisome and modulate their spectroscopic properties in order to mediate a directed and optimal energy transfer. This Nostoc sp. (strain PCC 7120 / SAG 25.82 / UTEX 2576) protein is Phycobilisome 32.1 kDa linker polypeptide, phycocyanin-associated, rod (cpcC).